The primary structure comprises 160 residues: Cyclic pyranopterin monophosphate synthase (160 aa).

Residues Leu76–His78 and Met114–Glu115 contribute to the substrate site. The active site involves Asp129.

Belongs to the MoaC family. In terms of assembly, homohexamer; trimer of dimers.

The catalysed reaction is (8S)-3',8-cyclo-7,8-dihydroguanosine 5'-triphosphate = cyclic pyranopterin phosphate + diphosphate. It participates in cofactor biosynthesis; molybdopterin biosynthesis. In terms of biological role, catalyzes the conversion of (8S)-3',8-cyclo-7,8-dihydroguanosine 5'-triphosphate to cyclic pyranopterin monophosphate (cPMP). This Saccharophagus degradans (strain 2-40 / ATCC 43961 / DSM 17024) protein is Cyclic pyranopterin monophosphate synthase.